The sequence spans 168 residues: Vasopressin-neurophysin 2-copeptin (168 aa).

The first 23 residues, 1–23 (MLARMLNTTLSACFLSLLAFSSA), serve as a signal peptide directing secretion. Cysteine 24 and cysteine 29 are disulfide-bonded. Glycine 32 carries the post-translational modification Glycine amide. Cystine bridges form between cysteine 45-cysteine 89, cysteine 48-cysteine 62, cysteine 56-cysteine 79, cysteine 63-cysteine 69, cysteine 96-cysteine 108, cysteine 102-cysteine 120, and cysteine 109-cysteine 114. Residue asparagine 135 is glycosylated (N-linked (GlcNAc...) asparagine).

Belongs to the vasopressin/oxytocin family. Interacts with vasopressin receptors V1bR/AVPR1B (Ki=85 pM), V1aR/AVPR1A (Ki=0.6 nM) and V2R/AVPR2 (Ki=4.9 nM). Interacts with oxytocin receptor (OXTR) (Ki=110 nM).

Its subcellular location is the secreted. Neurophysin 2 specifically binds vasopressin. Its function is as follows. Vasopressin has a direct antidiuretic action on the kidney, it also causes vasoconstriction of the peripheral vessels. Acts by binding to vasopressin receptors (V1bR/AVPR1B, V1aR/AVPR1A, and V2R/AVPR2). The sequence is that of Vasopressin-neurophysin 2-copeptin (Avp) from Mus musculus (Mouse).